Reading from the N-terminus, the 45-residue chain is Sperm-specific protein Phi-3 (45 aa).

Residues 1-45 (AKAKRSPRKKKAAVKKSSKSKAKKPKSPKKKKAAKKPAKKAAKKK) form a disordered region.

The protein localises to the nucleus. It localises to the chromosome. In terms of biological role, involved in nuclear basic protein transition: histones are replaced by spermatid specific proteins which are themselves replaced by protamines in late spermatids. The sequence is that of Sperm-specific protein Phi-3 from Mytilus californianus (California mussel).